The sequence spans 743 residues: MNRGRGVRKRNAPEKASILETCDEEIRAEVAQLFNKVRSYVPPAGEKWTLPDPNVVLCDPHVSHPRLQALKHSLNEVKNQLSDKDLSVWHQHTCFTNRAGTVTSHLRSTTNAELCTQAWAKFYEILGTFQLLPDSALKTGELNSIHLCEAPGAFISALNHFLKTSSLHCDWNWIANTLNPYYEANGRGCTITDDRLIVHTLPWWFFGSDNTGDIMLQKHLLELPRFVSNMRSVDLVTADGSFDCQGDPGEQERLVAPLQHCEAICALLLLGTGGSFVLKMFTLFEHSSVCLLYLLACCFRSVNIFKPGTSKSGNSELYIVCLDYQAKEQIRPLLSKLIRNYGPDLASTASLFPRRCIPDSFLSQHEEICTFFQALQVNTIQENLRLFVCMSTEQRRRLEQLREYAAEFYTKRFSVQYLPRKSWVCRGGVVRWVKVCERKQMGSLNQRKEMELQGWKQRLAQGNYGPFIEKHLVAAEGCEVVLNGPLDECDLGAWFALEGAALPKVCSSIFCDQEMLDFLNEALEGNLRVKTVNWSLKALPTCSSCSSDSPVSILSEICSHPDVTSCLVLGSQSWCDDKLTGVRIQPEFLQGPSYCGVQNVTMHDGQPDYQLELLNAVLFALQKQDQGSTLVIPLSSALTRFTSGLVFTLHLCFRYITFRCLSGWPPAALVCMGFSPPSALPSLLDFLQNVMEKMKKVELGRQVLQFVPLEELLRGELPHFLSSFNTAVIRQQLHMLIQLDQST.

The Adrift-type SAM-dependent 2'-O-MTase domain occupies 113-326; it reads ELCTQAWAKF…LYIVCLDYQA (214 aa). Lysine 121 is a catalytic residue. Positions 152, 171, and 239 each coordinate S-adenosyl-L-methionine. Residue aspartate 239 is part of the active site. The Proton acceptor role is filled by lysine 279.

The protein localises to the nucleus. The protein resides in the cytoplasm. It carries out the reaction a 5'-end (N(7)-methyl 5'-triphosphoguanosine)-(2'-O-methyl-ribonucleoside)-(ribonucleotide) in mRNA + S-adenosyl-L-methionine = a 5'-end (N(7)-methyl 5'-triphosphoguanosine)-(2'-O-methyl-ribonucleoside)-(2'-O-methyl-ribonucleotide) in mRNA + S-adenosyl-L-homocysteine + H(+). In terms of biological role, S-adenosyl-L-methionine-dependent methyltransferase that mediates mRNA cap2 2'-O-ribose methylation to the 5'-cap structure of mRNAs. Methylates the ribose of the second nucleotide of a m(7)GpppG-capped mRNA and small nuclear RNA (snRNA) (cap0) to produce m(7)GpppRmpNm (cap2). In Danio rerio (Zebrafish), this protein is Cap-specific mRNA (nucleoside-2'-O-)-methyltransferase 2 (cmtr2).